The chain runs to 398 residues: 1-deoxy-D-xylulose 5-phosphate reductoisomerase (398 aa).

T13, G14, S15, I16, R40, and N127 together coordinate NADPH. K128 contacts 1-deoxy-D-xylulose 5-phosphate. E129 contacts NADPH. D153 is a binding site for Mn(2+). Residues S154, E155, S188, and H211 each coordinate 1-deoxy-D-xylulose 5-phosphate. E155 is a binding site for Mn(2+). G217 provides a ligand contact to NADPH. 4 residues coordinate 1-deoxy-D-xylulose 5-phosphate: S224, N229, K230, and E233. E233 is a Mn(2+) binding site.

Belongs to the DXR family. Requires Mg(2+) as cofactor. The cofactor is Mn(2+).

The catalysed reaction is 2-C-methyl-D-erythritol 4-phosphate + NADP(+) = 1-deoxy-D-xylulose 5-phosphate + NADPH + H(+). Its pathway is isoprenoid biosynthesis; isopentenyl diphosphate biosynthesis via DXP pathway; isopentenyl diphosphate from 1-deoxy-D-xylulose 5-phosphate: step 1/6. Catalyzes the NADPH-dependent rearrangement and reduction of 1-deoxy-D-xylulose-5-phosphate (DXP) to 2-C-methyl-D-erythritol 4-phosphate (MEP). This chain is 1-deoxy-D-xylulose 5-phosphate reductoisomerase, found in Cellvibrio japonicus (strain Ueda107) (Pseudomonas fluorescens subsp. cellulosa).